Here is a 527-residue protein sequence, read N- to C-terminus: Nucleus accumbens-associated protein 1 (527 aa).

Residues 30–94 (CDVSVVVKGH…CYTGRLSMNV (65 aa)) form the BTB domain. The tract at residues 131 to 153 (QGLHAEEAPSSEPQSPVAQTSGW) is disordered. A compositionally biased stretch (polar residues) spans 141–152 (SEPQSPVAQTSG). A Glycyl lysine isopeptide (Lys-Gly) (interchain with G-Cter in SUMO1); alternate cross-link involves residue lysine 167. A Glycyl lysine isopeptide (Lys-Gly) (interchain with G-Cter in SUMO2); alternate cross-link involves residue lysine 167. A Glycyl lysine isopeptide (Lys-Gly) (interchain with G-Cter in SUMO2) cross-link involves residue lysine 183. The residue at position 188 (serine 188) is a Phosphoserine. The interval 210-292 (DLAANRPHQP…DEEEDGGEEG (83 aa)) is disordered. Residues 225–251 (APVVAAAQPAVAAGAGQPAGGVAAAGG) show a composition bias toward low complexity. Polar residues predominate over residues 255–277 (GPSTSERTSPGTSSAYTSDSPGS). Serine 259 bears the Phosphoserine; by PKC mark. Residues 281-292 (EEDEEEDGGEEG) are compositionally biased toward acidic residues. Glycyl lysine isopeptide (Lys-Gly) (interchain with G-Cter in SUMO2) cross-links involve residues lysine 318, lysine 452, lysine 480, lysine 483, and lysine 498. The 98-residue stretch at 374–471 (GTNVYITRAQ…DMCTNARRVV (98 aa)) folds into the BEN domain.

Homooligomer; mediated by the BTB domain. Interacts with HDAC3 and HDAC4. Interacts (via BTB domain) with CUL3, PSMD7 and RCOR1. Overexpressed in several types of carcinomas including ovarian serous carcinomas. Expression levels positively correlate with tumor recurrence in ovarian serous carcinomas, and intense immunoreactivity in primary ovarian tumors predicts early recurrence. Up-regulated in ovarian carcinomas after chemotherapy, suggesting a role in development of chemotherapy resistance in ovarian cancer.

The protein resides in the nucleus. Its subcellular location is the cytoplasm. Its function is as follows. Functions as a transcriptional repressor. Seems to function as a transcriptional corepressor in neuronal cells through recruitment of HDAC3 and HDAC4. Contributes to tumor progression, and tumor cell proliferation and survival. This may be mediated at least in part through repressing transcriptional activity of GADD45GIP1. Required for recruiting the proteasome from the nucleus to the cytoplasm and dendritic spines. The polypeptide is Nucleus accumbens-associated protein 1 (NACC1) (Homo sapiens (Human)).